The chain runs to 436 residues: Glutamyl-tRNA reductase (436 aa).

Residues 49–52 (TCNR), S109, 114–116 (EGQ), and Q120 each bind substrate. C50 acts as the Nucleophile in catalysis. Residue 198-203 (GAGRMS) coordinates NADP(+).

It belongs to the glutamyl-tRNA reductase family. In terms of assembly, homodimer.

The enzyme catalyses (S)-4-amino-5-oxopentanoate + tRNA(Glu) + NADP(+) = L-glutamyl-tRNA(Glu) + NADPH + H(+). The protein operates within porphyrin-containing compound metabolism; protoporphyrin-IX biosynthesis; 5-aminolevulinate from L-glutamyl-tRNA(Glu): step 1/2. Its pathway is porphyrin-containing compound metabolism; chlorophyll biosynthesis. Its function is as follows. Catalyzes the NADPH-dependent reduction of glutamyl-tRNA(Glu) to glutamate 1-semialdehyde (GSA). The sequence is that of Glutamyl-tRNA reductase from Prochlorococcus marinus (strain MIT 9301).